The sequence spans 312 residues: NADH-ubiquinone oxidoreductase chain 1 (312 aa).

Helical transmembrane passes span 3–23, 77–97, 104–124, 150–170, 174–194, 226–246, 250–270, and 289–309; these read FILSLIGSLLLIICVLVSVAF, ISPIFSLFLSLFVWMCMPFFV, LGGLFFLCCTSLGVYTVMVAG, LALILLSFVFLIGSYNMVYFF, IYVWFLIILFPMALVWLTISL, LIFMAEYASILFMSMLFCVIF, DVFNLLFYVKLTFISFIFIWA, and CFLSFSLNYLLFFIGFKILLF.

Belongs to the complex I subunit 1 family.

It localises to the mitochondrion inner membrane. The catalysed reaction is a ubiquinone + NADH + 5 H(+)(in) = a ubiquinol + NAD(+) + 4 H(+)(out). Its function is as follows. Core subunit of the mitochondrial membrane respiratory chain NADH dehydrogenase (Complex I) that is believed to belong to the minimal assembly required for catalysis. Complex I functions in the transfer of electrons from NADH to the respiratory chain. The immediate electron acceptor for the enzyme is believed to be ubiquinone. The polypeptide is NADH-ubiquinone oxidoreductase chain 1 (mt:ND1) (Drosophila subobscura (Fruit fly)).